The primary structure comprises 423 residues: Polyglutamylase complex subunit TTLL1 (423 aa).

In terms of domain architecture, TTL spans 1–367 (MAGKVKWVTD…NGEIPDCKWN (367 aa)). ATP-binding positions include lysine 138, 144–145 (QG), 181–184 (SLYI), and 194–196 (KFD). A protein is bound at residue glutamine 144. L-glutamate is bound at residue arginine 220. 241-242 (TN) is an ATP binding site. Residue lysine 259 coordinates L-glutamate. The Mg(2+) site is built by aspartate 313, glutamate 326, and asparagine 328. Lysine 344 serves as a coordination point for L-glutamate. Residues 391–423 (GADRELRSRQGQSLGPRAGRSRDSGRAVLTTWK) form a disordered region.

This sequence belongs to the tubulin polyglutamylase family. Part of the neuronal tubulin polyglutamylase complex which contains TPGS1, TPGS2, TTLL1, LRRC49 and NICN1. Interacts with PCM1, CSTPP1 and LRRC49. It depends on Mg(2+) as a cofactor. As to expression, expressed in a wide range of tissues. Has a stronger expression in heart, brain and testis.

The protein localises to the cytoplasm. Its subcellular location is the cytoskeleton. It localises to the cilium basal body. It is found in the cilium axoneme. The protein resides in the cell projection. The protein localises to the cilium. Its subcellular location is the flagellum. It carries out the reaction (L-glutamyl)(n)-gamma-L-glutamyl-L-glutamyl-[protein] + L-glutamate + ATP = (L-glutamyl)(n+1)-gamma-L-glutamyl-L-glutamyl-[protein] + ADP + phosphate + H(+). In terms of biological role, catalytic subunit of a polyglutamylase complex which modifies tubulin, generating side chains of glutamate on the gamma-carboxyl group of specific glutamate residues within the C-terminal tail of tubulin. Probably involved in the side-chain elongation step of the polyglutamylation reaction rather than the initiation step. Modifies both alpha- and beta-tubulins with a preference for the alpha-tail. Unlike most polyglutamylases of the tubulin--tyrosine ligase family, only displays a catalytic activity when in complex with other proteins as it is most likely lacking domains important for autonomous activity. Part of the neuronal tubulin polyglutamylase complex. Mediates cilia and flagella polyglutamylation which is essential for their biogenesis and motility. Involved in respiratory motile cilia function through the regulation of beating asymmetry. Essential for sperm flagella biogenesis, motility and male fertility. Involved in KLF4 glutamylation which impedes its ubiquitination, thereby leading to somatic cell reprogramming, pluripotency maintenance and embryogenesis. In Homo sapiens (Human), this protein is Polyglutamylase complex subunit TTLL1.